We begin with the raw amino-acid sequence, 1338 residues long: Aldehyde oxidase (1338 aa).

One can recognise a 2Fe-2S ferredoxin-type domain in the interval 5-92; that stretch reads SELLFYVNGR…GAAVTTVEGI (88 aa). [2Fe-2S] cluster is bound by residues Cys-44, Cys-49, Cys-52, and Cys-74. Gln-113 contacts Mo-molybdopterin. Residues Cys-114, Cys-117, Cys-149, and Cys-151 each coordinate [2Fe-2S] cluster. Cys-151 lines the Mo-molybdopterin pocket. Residues 236 to 421 enclose the FAD-binding PCMH-type domain; sequence FGSERMMWFS…VSVNIPYSRK (186 aa). Residues 264–271, Ala-345, Ser-354, His-358, Asp-367, and Leu-411 each bind FAD; that span reads VIMGNTSV. Residues 806 to 807 and Met-1047 each bind Mo-molybdopterin; that span reads AF. Ser-1068 is subject to Phosphoserine. Residues 1088–1091, Gln-1203, and Leu-1268 each bind Mo-molybdopterin; that span reads GSVV. Glu-1270 functions as the Proton acceptor; for azaheterocycle hydroxylase activity in the catalytic mechanism.

Belongs to the xanthine dehydrogenase family. In terms of assembly, homodimer. [2Fe-2S] cluster is required as a cofactor. It depends on FAD as a cofactor. Mo-molybdopterin serves as cofactor. In terms of tissue distribution, abundant in liver, expressed in adipose tissue and at lower levels in lung, skeletal muscle, pancreas. In contrast to mice, no significant gender difference in AOX1 expression level (at protein level).

Its subcellular location is the cytoplasm. It catalyses the reaction an aldehyde + O2 + H2O = a carboxylate + H2O2 + H(+). The catalysed reaction is retinal + O2 + H2O = retinoate + H2O2 + H(+). Its activity is regulated as follows. Is very potently inhibited by raloxifene. Also inhibited by estradiol, ethinyl estradiol, hydralazine, menadione, isovanillin and thioridazine. Not inhibited by allopurinol, a xanthine dehydrogenase potent inhibitor. Oxidase with broad substrate specificity, oxidizing aromatic azaheterocycles, such as N1-methylnicotinamide, N-methylphthalazinium and phthalazine, as well as aldehydes, such as benzaldehyde, retinal, pyridoxal, and vanillin. Plays a key role in the metabolism of xenobiotics and drugs containing aromatic azaheterocyclic substituents. Participates in the bioactivation of prodrugs such as famciclovir, catalyzing the oxidation step from 6-deoxypenciclovir to penciclovir, which is a potent antiviral agent. Is probably involved in the regulation of reactive oxygen species homeostasis. May be a prominent source of superoxide generation via the one-electron reduction of molecular oxygen. May also catalyze nitric oxide (NO) production via the reduction of nitrite to NO with NADH or aldehyde as electron donor. May play a role in adipogenesis. The chain is Aldehyde oxidase from Homo sapiens (Human).